Reading from the N-terminus, the 101-residue chain is Protein Tat (101 aa).

Positions 1–10 are enriched in basic and acidic residues; it reads MEPVDPRLEP. The tract at residues 1-20 is disordered; the sequence is MEPVDPRLEPWNHPGSQPKT. The interaction with human CREBBP stretch occupies residues 1–24; sequence MEPVDPRLEPWNHPGSQPKTACNN. The segment at 1–48 is transactivation; sequence MEPVDPRLEPWNHPGSQPKTACNNCYCKRCCYHCLYCFTKKGLGISYG. Positions 22, 25, and 27 each coordinate Zn(2+). The interval 22-37 is cysteine-rich; sequence CNNCYCKRCCYHCLYC. Residue Lys-28 is modified to N6-acetyllysine; by host PCAF. Zn(2+) is bound by residues Cys-30, His-33, Cys-34, and Cys-37. The interval 38–48 is core; that stretch reads FTKKGLGISYG. Over residues 48 to 58 the composition is skewed to basic residues; sequence GRKKRSQRRRT. Positions 48–101 are disordered; it reads GRKKRSQRRRTPQSSKSHQDLIPEQPLSQQQGDQTGQKKQKEALESKTEADPCD. The short motif at 49–57 is the Nuclear localization signal, RNA-binding (TAR), and protein transduction element; that stretch reads RKKRSQRRR. The segment at 49-86 is interaction with the host capping enzyme RNGTT; that stretch reads RKKRSQRRRTPQSSKSHQDLIPEQPLSQQQGDQTGQKK. 2 positions are modified to N6-acetyllysine; by host EP300 and GCN5L2: Lys-50 and Lys-51. Arg-52 is subject to Asymmetric dimethylarginine; by host PRMT6. Residues 86 to 101 show a composition bias toward basic and acidic residues; it reads KQKEALESKTEADPCD.

It belongs to the lentiviruses Tat family. Interacts with host CCNT1. Associates with the P-TEFb complex composed at least of Tat, P-TEFb (CDK9 and CCNT1), TAR RNA, RNA Pol II. Recruits the HATs CREBBP, TAF1/TFIID, EP300, PCAF and GCN5L2. Interacts with host KAT5/Tip60; this interaction targets the latter to degradation. Interacts with the host deacetylase SIRT1. Interacts with host capping enzyme RNGTT; this interaction stimulates RNGTT. Binds to host KDR, and to the host integrins ITGAV/ITGB3 and ITGA5/ITGB1. Interacts with host KPNB1/importin beta-1 without previous binding to KPNA1/importin alpha-1. Interacts with EIF2AK2. Interacts with host nucleosome assembly protein NAP1L1; this interaction may be required for the transport of Tat within the nucleus, since the two proteins interact at the nuclear rim. Interacts with host C1QBP/SF2P32; this interaction involves lysine-acetylated Tat. Interacts with the host chemokine receptors CCR2, CCR3 and CXCR4. Interacts with host DPP4/CD26; this interaction may trigger an anti-proliferative effect. Interacts with host LDLR. Interacts with the host extracellular matrix metalloproteinase MMP1. Interacts with host PRMT6; this interaction mediates Tat's methylation. Interacts with, and is ubiquitinated by MDM2/Hdm2. Interacts with host PSMC3 and HTATIP2. Interacts with STAB1; this interaction may overcome SATB1-mediated repression of IL2 and IL2RA (interleukin) in T cells by binding to the same domain than HDAC1. Interacts (when acetylated) with human CDK13, thereby increasing HIV-1 mRNA splicing and promoting the production of the doubly spliced HIV-1 protein Nef. Interacts with host TBP; this interaction modulates the activity of transcriptional pre-initiation complex. Interacts with host RELA. Interacts with host PLSCR1; this interaction negatively regulates Tat transactivation activity by altering its subcellular distribution. In terms of processing, asymmetrical arginine methylation by host PRMT6 seems to diminish the transactivation capacity of Tat and affects the interaction with host CCNT1. Post-translationally, acetylation by EP300, CREBBP, GCN5L2/GCN5 and PCAF regulates the transactivation activity of Tat. EP300-mediated acetylation of Lys-50 promotes dissociation of Tat from the TAR RNA through the competitive binding to PCAF's bromodomain. In addition, the non-acetylated Tat's N-terminus can also interact with PCAF. PCAF-mediated acetylation of Lys-28 enhances Tat's binding to CCNT1. Lys-50 is deacetylated by SIRT1. Polyubiquitination by host MDM2 does not target Tat to degradation, but activates its transactivation function and fosters interaction with CCNT1 and TAR RNA. In terms of processing, phosphorylated by EIF2AK2 on serine and threonine residues adjacent to the basic region important for TAR RNA binding and function. Phosphorylation of Tat by EIF2AK2 is dependent on the prior activation of EIF2AK2 by dsRNA.

It localises to the host nucleus. The protein resides in the host nucleolus. The protein localises to the host cytoplasm. Its subcellular location is the secreted. Functionally, transcriptional activator that increases RNA Pol II processivity, thereby increasing the level of full-length viral transcripts. Recognizes a hairpin structure at the 5'-LTR of the nascent viral mRNAs referred to as the transactivation responsive RNA element (TAR) and recruits the cyclin T1-CDK9 complex (P-TEFb complex) that will in turn hyperphosphorylate the RNA polymerase II to allow efficient elongation. The CDK9 component of P-TEFb and other Tat-activated kinases hyperphosphorylate the C-terminus of RNA Pol II that becomes stabilized and much more processive. Other factors such as HTATSF1/Tat-SF1, SUPT5H/SPT5, and HTATIP2 are also important for Tat's function. Besides its effect on RNA Pol II processivity, Tat induces chromatin remodeling of proviral genes by recruiting the histone acetyltransferases (HATs) CREBBP, EP300 and PCAF to the chromatin. This also contributes to the increase in proviral transcription rate, especially when the provirus integrates in transcriptionally silent region of the host genome. To ensure maximal activation of the LTR, Tat mediates nuclear translocation of NF-kappa-B by interacting with host RELA. Through its interaction with host TBP, Tat may also modulate transcription initiation. Tat can reactivate a latently infected cell by penetrating in it and transactivating its LTR promoter. In the cytoplasm, Tat is thought to act as a translational activator of HIV-1 mRNAs. Extracellular circulating Tat can be endocytosed by surrounding uninfected cells via the binding to several surface receptors such as CD26, CXCR4, heparan sulfate proteoglycans (HSPG) or LDLR. Neurons are rarely infected, but they internalize Tat via their LDLR. Through its interaction with nuclear HATs, Tat is potentially able to control the acetylation-dependent cellular gene expression. Modulates the expression of many cellular genes involved in cell survival, proliferation or in coding for cytokines or cytokine receptors. Tat plays a role in T-cell and neurons apoptosis. Tat induced neurotoxicity and apoptosis probably contribute to neuroAIDS. Circulating Tat also acts as a chemokine-like and/or growth factor-like molecule that binds to specific receptors on the surface of the cells, affecting many cellular pathways. In the vascular system, Tat binds to ITGAV/ITGB3 and ITGA5/ITGB1 integrins dimers at the surface of endothelial cells and competes with bFGF for heparin-binding sites, leading to an excess of soluble bFGF. This chain is Protein Tat, found in Homo sapiens (Human).